The primary structure comprises 185 residues: Ribosome-recycling factor (185 aa).

This sequence belongs to the RRF family.

It is found in the cytoplasm. Responsible for the release of ribosomes from messenger RNA at the termination of protein biosynthesis. May increase the efficiency of translation by recycling ribosomes from one round of translation to another. This Campylobacter hominis (strain ATCC BAA-381 / DSM 21671 / CCUG 45161 / LMG 19568 / NCTC 13146 / CH001A) protein is Ribosome-recycling factor.